The following is a 143-amino-acid chain: Large ribosomal subunit protein uL15 (143 aa).

Belongs to the universal ribosomal protein uL15 family. As to quaternary structure, part of the 50S ribosomal subunit.

Its function is as follows. Binds to the 23S rRNA. The polypeptide is Large ribosomal subunit protein uL15 (Methanococcus aeolicus (strain ATCC BAA-1280 / DSM 17508 / OCM 812 / Nankai-3)).